The sequence spans 139 residues: Nucleoside diphosphate kinase (139 aa).

Positions 10, 58, 86, 92, 103, and 113 each coordinate ATP. The active-site Pros-phosphohistidine intermediate is the H116.

This sequence belongs to the NDK family. As to quaternary structure, homotetramer. Mg(2+) is required as a cofactor.

The protein resides in the cytoplasm. The enzyme catalyses a 2'-deoxyribonucleoside 5'-diphosphate + ATP = a 2'-deoxyribonucleoside 5'-triphosphate + ADP. The catalysed reaction is a ribonucleoside 5'-diphosphate + ATP = a ribonucleoside 5'-triphosphate + ADP. Functionally, major role in the synthesis of nucleoside triphosphates other than ATP. The ATP gamma phosphate is transferred to the NDP beta phosphate via a ping-pong mechanism, using a phosphorylated active-site intermediate. The chain is Nucleoside diphosphate kinase from Desulfovibrio desulfuricans (strain ATCC 27774 / DSM 6949 / MB).